A 254-amino-acid polypeptide reads, in one-letter code: Persulfide dioxygenase ETHE1, mitochondrial (254 aa).

The transit peptide at 1-7 directs the protein to the mitochondrion; it reads MAEAVLR. Phosphoserine is present on residues Ser14 and Ser19. Lys66 is modified (N6-acetyllysine). Residues His79, His135, and Asp154 each coordinate Fe cation. Lys172 carries the N6-acetyllysine; alternate modification. Residue Lys172 is modified to N6-succinyllysine; alternate.

The protein belongs to the metallo-beta-lactamase superfamily. Glyoxalase II family. In terms of assembly, homodimer. Monomer. Interacts with TST. May interact with RELA. Fe(2+) is required as a cofactor. As to expression, ubiquitously expressed.

The protein resides in the cytoplasm. Its subcellular location is the nucleus. It localises to the mitochondrion matrix. It catalyses the reaction S-sulfanylglutathione + O2 + H2O = sulfite + glutathione + 2 H(+). Glutathione increases enzyme activity. Sulfur dioxygenase that plays an essential role in hydrogen sulfide catabolism in the mitochondrial matrix. Hydrogen sulfide (H(2)S) is first oxidized by SQRDL, giving rise to cysteine persulfide residues. ETHE1 consumes molecular oxygen to catalyze the oxidation of the persulfide, once it has been transferred to a thiophilic acceptor, such as glutathione (R-SSH). Plays an important role in metabolic homeostasis in mitochondria by metabolizing hydrogen sulfide and preventing the accumulation of supraphysiological H(2)S levels that have toxic effects, due to the inhibition of cytochrome c oxidase. First described as a protein that can shuttle between the nucleus and the cytoplasm and suppress p53-induced apoptosis by sequestering the transcription factor RELA/NFKB3 in the cytoplasm and preventing its accumulation in the nucleus. This chain is Persulfide dioxygenase ETHE1, mitochondrial (ETHE1), found in Homo sapiens (Human).